The primary structure comprises 597 residues: Aspartate--tRNA(Asp/Asn) ligase (597 aa).

Glutamate 175 is a binding site for L-aspartate. Residues glutamine 199–lysine 202 form an aspartate region. Arginine 221 serves as a coordination point for L-aspartate. ATP contacts are provided by residues arginine 221–glutamate 223 and glutamine 230. L-aspartate is bound at residue histidine 453. Position 487 (glutamate 487) interacts with ATP. Arginine 494 contributes to the L-aspartate binding site. An ATP-binding site is contributed by glycine 539–arginine 542. Residues serine 562–asparagine 597 form a disordered region. Over residues glutamate 579–lysine 589 the composition is skewed to basic and acidic residues.

Belongs to the class-II aminoacyl-tRNA synthetase family. Type 1 subfamily. Homodimer.

It is found in the cytoplasm. It carries out the reaction tRNA(Asx) + L-aspartate + ATP = L-aspartyl-tRNA(Asx) + AMP + diphosphate. Functionally, aspartyl-tRNA synthetase with relaxed tRNA specificity since it is able to aspartylate not only its cognate tRNA(Asp) but also tRNA(Asn). Reaction proceeds in two steps: L-aspartate is first activated by ATP to form Asp-AMP and then transferred to the acceptor end of tRNA(Asp/Asn). This Corynebacterium kroppenstedtii (strain DSM 44385 / JCM 11950 / CIP 105744 / CCUG 35717) protein is Aspartate--tRNA(Asp/Asn) ligase.